The sequence spans 231 residues: Ribosyldihydronicotinamide dehydrogenase [quinone] (231 aa).

FAD is bound by residues H12, F18–S21, and L104–F107. F127 to I129 is a substrate binding site. FAD-binding positions include T148–G151 and Y156. H174 and H178 together coordinate Zn(2+). Residue D194 participates in FAD binding. S197 is modified (phosphoserine). Residue R201 participates in FAD binding. A Zn(2+)-binding site is contributed by C223.

Belongs to the NAD(P)H dehydrogenase (quinone) family. As to quaternary structure, homodimer. Requires Zn(2+) as cofactor. It depends on FAD as a cofactor.

The protein resides in the cytoplasm. The catalysed reaction is 1-(beta-D-ribofuranosyl)-1,4-dihydronicotinamide + a quinone + H(+) = beta-nicotinamide D-riboside + a quinol. Functionally, the enzyme apparently serves as a quinone reductase in connection with conjugation reactions of hydroquinones involved in detoxification pathways as well as in biosynthetic processes such as the vitamin K-dependent gamma-carboxylation of glutamate residues in prothrombin synthesis. In Mus musculus (Mouse), this protein is Ribosyldihydronicotinamide dehydrogenase [quinone] (Nqo2).